A 593-amino-acid polypeptide reads, in one-letter code: MRSAARRGRAAPAARDSLPVLLFLCLLLKTCEPKTANAFKPNILLIMADDLGTGDLGCYGNNTLRTPNIDQLAEEGVRLTQHLAAAPLCTPSRAAFLTGRHSFRSGMDASNGYRALQWNAGSGGLPENETTFARILQQHGYATGLIGKWHQGVNCASRGDHCHHPLNHGFDYFYGMPFTLTNDCDPGRPPEVDAALRAQLWGYTQFLALGILTLAAGQTCGFFSVSARAVTGMAGVGCLFFISWYSSFGFVRRWNCILMRNHDVTEQPMVLEKTASLMLKEAVSYIERHKHGPFLLFLSLLHVHIPLVTTSAFLGKSQHGLYGDNVEEMDWLIGKVLNAIEDNGLKNSTFTYFTSDHGGHLEARDGHSQLGGWNGIYKGGKGMGGWEGGIRVPGIFHWPGVLPAGRVIGEPTSLMDVFPTVVQLVGGEVPQDRVIDGHSLVPLLQGAEARSAHEFLFHYCGQHLHAARWHQKDSGSVWKVHYTTPQFHPEGAGACYGRGVCPCSGEGVTHHRPPLLFDLSRDPSEARPLTPDSEPLYHAVIARVGAAVSEHRQTLSPVPQQFSMSNILWKPWLQPCCGHFPFCSCHEDGDGTP.

A signal peptide spans 1-33; that stretch reads MRSAARRGRAAPAARDSLPVLLFLCLLLKTCEP. Ca(2+) contacts are provided by Asp49 and Asp50. Asn61 carries an N-linked (GlcNAc...) asparagine glycan. Cys89 serves as a coordination point for Ca(2+). Cys89 (nucleophile) is an active-site residue. The residue at position 89 (Cys89) is a 3-oxoalanine (Cys). Asn128 carries an N-linked (GlcNAc...) asparagine glycan. Lys148 contacts substrate. The active site involves His150. His304 lines the substrate pocket. An N-linked (GlcNAc...) asparagine glycan is attached at Asn347. 2 residues coordinate Ca(2+): Asp356 and His357. Lys381 contributes to the substrate binding site.

This sequence belongs to the sulfatase family. The cofactor is Ca(2+). The conversion to 3-oxoalanine (also known as C-formylglycine, FGly), of a serine or cysteine residue in prokaryotes and of a cysteine residue in eukaryotes, is critical for catalytic activity. Expressed in the pancreas, kidney, liver, lung, placenta, brain and heart.

The protein resides in the lysosome. The protein is Arylsulfatase D (ARSD) of Homo sapiens (Human).